The chain runs to 149 residues: Cytochrome c-type biogenesis protein CcmE (149 aa).

Over 1–8 (MNPKRKQR) the chain is Cytoplasmic. Residues 9-29 (LIIVSFLVIGVSATVGLIMAA) traverse the membrane as a helical; Signal-anchor for type II membrane protein segment. At 30 to 149 (LSSNVNHFYN…AQDAAPAQTY (120 aa)) the chain is on the periplasmic side. 2 residues coordinate heme: H124 and Y128.

It belongs to the CcmE/CycJ family.

Its subcellular location is the cell inner membrane. Heme chaperone required for the biogenesis of c-type cytochromes. Transiently binds heme delivered by CcmC and transfers the heme to apo-cytochromes in a process facilitated by CcmF and CcmH. The protein is Cytochrome c-type biogenesis protein CcmE of Hahella chejuensis (strain KCTC 2396).